We begin with the raw amino-acid sequence, 694 residues long: ATP-binding cassette sub-family G member 8 (694 aa).

At 1-437 the chain is on the cytoplasmic side; sequence MAEKTKEETQ…ISNDFRDLPT (437 aa). One can recognise an ABC transporter domain in the interval 91-335; sequence AQFKLPWRSR…FTSIGYPCPR (245 aa). In terms of domain architecture, ABC transmembrane type-2 spans 436–684; it reads PTLFIHGAEA…FLSLYYLSLK (249 aa). Residues 438–458 form a helical membrane-spanning segment; the sequence is LFIHGAEACLMSLIIGFLYYG. Topologically, residues 459-468 are extracellular; that stretch reads HADKPLSFMD. Residues 469–489 traverse the membrane as a helical segment; sequence MAALLFMIGALIPFNVILDVV. Residues 490-518 are Cytoplasmic-facing; it reads SKCHSERSLLYYELEDGLYTAGPYFFAKV. Residues 519–539 form a helical membrane-spanning segment; it reads LGELPEHCAYVIIYGMPIYWL. The Extracellular segment spans residues 540 to 548; sequence TNLRPGPEL. The helical transmembrane segment at 549 to 569 threads the bilayer; that stretch reads FLLHFMLLWLVVFCCRTMALA. Topologically, residues 570-576 are cytoplasmic; it reads ASAMLPT. A helical membrane pass occupies residues 577 to 597; the sequence is FHMSSFCCNALYNSFYLTAGF. Over 598–660 the chain is Extracellular; the sequence is MINLNNLWIV…VTAMDLNSHP (63 aa). N-linked (GlcNAc...) asparagine glycosylation occurs at N640. A helical transmembrane segment spans residues 661–681; sequence LYAIYLIVIGISCGFLSLYYL. At 682–694 the chain is on the cytoplasmic side; sequence SLKFIKQKSIQDW.

The protein belongs to the ABC transporter superfamily. ABCG family. Eye pigment precursor importer (TC 3.A.1.204) subfamily. As to quaternary structure, heterodimer with ABCG8. The cofactor is Mg(2+). N-glycosylated. N-glycosylation is important for efficient export out of the endoplasmic reticulum. In terms of tissue distribution, highest expression in liver, with lower levels in small intestine and colon.

It localises to the cell membrane. The protein localises to the apical cell membrane. It carries out the reaction cholesterol(in) + ATP + H2O = cholesterol(out) + ADP + phosphate + H(+). It catalyses the reaction sitosterol(in) + ATP + H2O = sitosterol(out) + ADP + phosphate + H(+). ABCG5 and ABCG8 form an obligate heterodimer that mediates Mg(2+)- and ATP-dependent sterol transport across the cell membrane. Plays an essential role in the selective transport of the dietary cholesterol in and out of the enterocytes and in the selective sterol excretion by the liver into bile. Required for normal sterol homeostasis. The heterodimer with ABCG5 has ATPase activity. This Rattus norvegicus (Rat) protein is ATP-binding cassette sub-family G member 8.